Reading from the N-terminus, the 61-residue chain is Prophage outer membrane lipoprotein RzoR (61 aa).

An N-terminal signal peptide occupies residues Met-1–Gly-19. A lipid anchor (N-palmitoyl cysteine) is attached at Cys-20. Cys-20 is lipidated: S-diacylglycerol cysteine.

Belongs to the lambdalikevirus o-spanin family. Homodimer; disulfide-linked. Interacts (via C-terminus) with RZ (via C-terminus). Part of the spanin complex which spans the entire periplasmic space. The spanin complex is composed of spanin, inner membrane subunit and spanin, outer membrane subunit.

It is found in the cell outer membrane. In terms of biological role, component of the spanin complex that disrupts the outer membrane and causes cell lysis during virus exit. The spanin complex conducts the final step in cell lysis by disrupting the outer membrane after holin and endolysin action have permeabilized the inner membrane and degraded the host peptidoglycans. This chain is Prophage outer membrane lipoprotein RzoR (rzoR), found in Escherichia coli (strain K12).